The primary structure comprises 256 residues: Hydroxyethylthiazole kinase (256 aa).

Met38 serves as a coordination point for substrate. ATP is bound by residues Arg114 and Thr159. Gly186 contacts substrate.

It belongs to the Thz kinase family. The cofactor is Mg(2+).

The catalysed reaction is 5-(2-hydroxyethyl)-4-methylthiazole + ATP = 4-methyl-5-(2-phosphooxyethyl)-thiazole + ADP + H(+). It functions in the pathway cofactor biosynthesis; thiamine diphosphate biosynthesis; 4-methyl-5-(2-phosphoethyl)-thiazole from 5-(2-hydroxyethyl)-4-methylthiazole: step 1/1. Its function is as follows. Catalyzes the phosphorylation of the hydroxyl group of 4-methyl-5-beta-hydroxyethylthiazole (THZ). This Streptococcus agalactiae serotype Ia (strain ATCC 27591 / A909 / CDC SS700) protein is Hydroxyethylthiazole kinase.